Reading from the N-terminus, the 380-residue chain is Shaggy-related protein kinase eta (380 aa).

One can recognise a Protein kinase domain in the interval 40–324; that stretch reads YMAERVVGTG…ALEACAHPFF (285 aa). Residues 46–54 and Lys-69 contribute to the ATP site; that span reads VGTGSFGIV. Thr-104 bears the Phosphothreonine mark. Phosphoserine is present on Ser-105. The Proton acceptor role is filled by Asp-165. Position 187 is a phosphoserine (Ser-187). Tyr-200 is modified (phosphotyrosine). 2 positions are modified to phosphothreonine: Thr-220 and Thr-261. Ser-310 is modified (phosphoserine). Thr-314 carries the phosphothreonine modification. Ser-353 is modified (phosphoserine).

This sequence belongs to the protein kinase superfamily. CMGC Ser/Thr protein kinase family. GSK-3 subfamily. As to quaternary structure, interacts in vitro with the C-terminal fragment of BZR1 and with BES1/BZR2, but not through the kinase domain. Interacts with BHLH150, beet curly top virus AL4/C4 and tomato golden mosaic virus AL4/AC4. Interacts with YDA. Interacts with MKK4. Interacts with KIB1 and KIB2 in a brassinosteroid (BR)-dependent manner. Interacts with BSK1, BSK6, BSK8 and BSK11. Binds to WRKY46, WRKY54 and WRKY70. Component of a complex made of POLAR, BASL, ASK7/BIN2 and ASK3/SK12. Binds to POLAR and BASL. Post-translationally, autophosphorylated mainly on threonine and serine residues. In terms of processing, ubiquitination and subsequent proteasomal degradation mediated by KIB1. As to expression, in the two outer cell layers of the developing seed coat and restricted to the suspensor cells in developing embryos. Mostly expressed in stomatal lineage cells with asymmetric cell division (ACD) potential. Observed in small cells of non-protruding hypocotyl cell files and of developing cotyledon epidermis.

The protein resides in the cytoplasm. Its subcellular location is the cell cortex. The protein localises to the nucleus. It localises to the cell membrane. It carries out the reaction L-seryl-[protein] + ATP = O-phospho-L-seryl-[protein] + ADP + H(+). The catalysed reaction is L-threonyl-[protein] + ATP = O-phospho-L-threonyl-[protein] + ADP + H(+). Its activity is regulated as follows. Inactivated by an unknown mechanism after binding of brassinosteroids to the brassinosteroid receptor complex. Inhibited by lithium. Inhibited by dephosphorylation at Tyr-200 by BSU1. Competitive inhibition by KIB1 that reduces substrate (e.g. BZR1) access. Repressed by bikinin. Its function is as follows. Negative regulator in brassinosteroid signal transduction pathway important for plant growth. May be also involved in auxin signaling pathway. Phosphorylates and increases the degradation of BZR1 and BZR2/BES1 by the proteasome. Phosphorylates BHLH150, beet curly top virus C4 and tomato golden mosaic virus AC4 on threonine and serine residues. Upon brassinosteroid signaling, inhibits stomatal development by phosphorylating and inhibiting the MAPKK kinase YDA and the MAPK kinases MKK4 and MKK5. Phosphorylates BSK1, BSK3, BSK5, BSK6, BSK8 and BSK11 in vitro. Phoyphorylates and destabilizes WRKY46, WRKY54 and WRKY70. Mediates BASL nuclear exclusion; kinase activity is required for this function. Required first at the cortical polarity site, to restrict MAPK signaling and promote asymmetric cell division (ACD), and second in the nucleus of stomatal lineage ground cells (SLGCs) or meristemoids, to limit cell division and to promote differentiation into pavement or stomatal guard cells, respectively, likely by initiating BASL polarization. Phosphorylates BASL, YDA and SPCH in vitro and POLAR in vivo. Phosphorylates and inhibits SPCH in the nucleus of SLGC undergoing ACD, thus negatively regulating stomatal development. This Arabidopsis thaliana (Mouse-ear cress) protein is Shaggy-related protein kinase eta.